We begin with the raw amino-acid sequence, 369 residues long: MTLCKWWRFMSDLDALQSNILADIANASDEAALEAVRVMALGKKGSISALLATLGKMSPDERKTEGAKINLAKDTVTRALAARREVLKALALDARLASETIDVTPPLRETPAEAGRIHPLSQVWDEVTTIFADMGFAVAEGPDIETDDYNFTRLNFPEGHPAREMHDTFYFNPKDDGSRLLLRTHTSPVQVRTMLSQKPPIRVICPGRTYRSDSDQTHTPMFHQVEGLVIDKSSHLGHLKWILHEFCKAFFEVDNVNMRFRPSFFPFTEPSLEVDIQCRRDKHEIRFGEGEDWLEILGCGMVHPNVLKLCGIDPEVYQGFAWGMGIDRITMLKYGIADLRQLFEGDVRWLTHYGFRPLEIPTLAGGLSS.

Residue E269 coordinates Mg(2+).

Belongs to the class-II aminoacyl-tRNA synthetase family. Phe-tRNA synthetase alpha subunit type 1 subfamily. In terms of assembly, tetramer of two alpha and two beta subunits. Mg(2+) serves as cofactor.

Its subcellular location is the cytoplasm. The enzyme catalyses tRNA(Phe) + L-phenylalanine + ATP = L-phenylalanyl-tRNA(Phe) + AMP + diphosphate + H(+). The sequence is that of Phenylalanine--tRNA ligase alpha subunit from Nitrobacter winogradskyi (strain ATCC 25391 / DSM 10237 / CIP 104748 / NCIMB 11846 / Nb-255).